Consider the following 565-residue polypeptide: Salicyl-AMP ligase / salicyl-S-ArCP synthetase (565 aa).

G214, G330, V352, D436, R451, and K542 together coordinate ATP.

Belongs to the ATP-dependent AMP-binding enzyme family.

The catalysed reaction is salicylate + ATP + H(+) = 2-hydroxybenzoyl-5'-AMP + diphosphate. It carries out the reaction 2-hydroxybenzoyl-5'-AMP + holo-[ACP] = salicyl-[ACP] + AMP + H(+). It functions in the pathway siderophore biosynthesis; mycobactin biosynthesis. Inhibited by salicyl-AMS, an acyl-AMP analog. Also inhibited by 5'-O-[(N-acyl)sulfamoyl]adenosines. Involved in the initial steps of the mycobactin biosynthetic pathway. Catalyzes the salicylation of the aryl carrier protein (ArCP) domain of MbtB through a two-step reaction. The first step is the ATP-dependent adenylation of salicylate to generate a salicyl-AMP intermediate. The second step is the transfer of this activated salicylate to MbtB to form a salicyl-ArCP domain thioester. This is Salicyl-AMP ligase / salicyl-S-ArCP synthetase from Mycobacterium tuberculosis (strain ATCC 25618 / H37Rv).